Consider the following 1042-residue polypeptide: MFKKVENKANFPKIEEKILKFWNDNKIFEKSMEQREGCEEFTFYDGPPFATGLPHFGHFVPNTIKDIIPRYQTMKGKYVKRNFGWDTHGLPVEYEVEKKLGISGKYEIENYGIENFNKECKKIVLRYTEEWKNIILRLGRWVDFEKGYKTMDISFMESVWWVFKNLYNKGLIYESYYVLPYSPKLATPLSNFEVNLGEYKEVNDPSLTIKFKIKDKNEYLLAWTTTPWTLPSNLGIAVGKEIEYSKIFDKKKEEILILGSKKINSYFDDENAYTIIEKFKGSQLQGIEYEPIFNYFLEQKDKGAFKVHTADYITTDDGTGIVHIAPFGEEDYRVLKKHTNVDIIDPLDAECKFTNRVKDFKGLFVKDADKKIIENLKLRNFLFKRENYLHRYPFCYRTNYPIIYRPISSWFVNVEKIKTQLLEVNEKINWMPAHLKKGRFGKWLENAKDWAISRNRFWGNPIPIWICSKTGKKICVGSRKELEELSGQKIEDLHKDKIDKITWPSKDGGTFIRTSEVLDCWFESGAMPYASNHYPFANESNFKNIFPADFIAEGLDQTRGWFYTLTILGTSLFENTAFKNVIVNGLVLSSDGRKMSKSFKNYTDPMEVINTFGADALRLYLIMSPVVKADDLKYSDNGVRDVLKNIIIPIWNAYSFFTTYAIIDKFKPTKNLSLVKSNNLDKWIISELESLKKILNKEIDKYNLTKSIESLLEFIDKLNNWYIRRSRRRFWKSENDKDKNDAYETLYYAIKTLMILLAPFIPFITEEIYQNLKTDEDKQSIHLNDYPKANENFIDKTIEEKINLARKITSMARSLRSLHNIKIRMPISTIYVVTKNQNEQNMLIEMQEIILDEINVKEMKIKSNEEELITYKAKANFKELGKKLGKDMKTVSIEISKLKNEDIIKIINGISHEIKVDNAKYYLSLNDIILERDEKDNLKVINEESITIGIDSLITQELYLEGLTREFVRQIQNLRKEKNFDVSDRINLYIENNATLEEILNKFEKYIKTETLALNIILNKSKLEKKINLDNDIFTIIGIEKC.

Positions 48–58 (PFATGLPHFGH) match the 'HIGH' region motif. Positions 594-598 (KMSKS) match the 'KMSKS' region motif. Lys-597 serves as a coordination point for ATP.

This sequence belongs to the class-I aminoacyl-tRNA synthetase family. IleS type 2 subfamily. In terms of assembly, monomer. It depends on Zn(2+) as a cofactor.

It localises to the cytoplasm. The catalysed reaction is tRNA(Ile) + L-isoleucine + ATP = L-isoleucyl-tRNA(Ile) + AMP + diphosphate. Its function is as follows. Catalyzes the attachment of isoleucine to tRNA(Ile). As IleRS can inadvertently accommodate and process structurally similar amino acids such as valine, to avoid such errors it has two additional distinct tRNA(Ile)-dependent editing activities. One activity is designated as 'pretransfer' editing and involves the hydrolysis of activated Val-AMP. The other activity is designated 'posttransfer' editing and involves deacylation of mischarged Val-tRNA(Ile). In Borrelia garinii subsp. bavariensis (strain ATCC BAA-2496 / DSM 23469 / PBi) (Borreliella bavariensis), this protein is Isoleucine--tRNA ligase.